The chain runs to 200 residues: MAEERGEKRGRRRDRENPRDRDDESSELVDKLVGINRVAKTVKGGKNFGFAALVVVGDQKGRAGFGKGKAREVPEAIRKATEEAKRNLVRIPLREGRTLHHDGNGRHGAGKVVLRAAPPGTGVIAGGPMRAVMEVLGVQDVVGKSLGSSNPYNMVRATFDALKGQANPRTVASKRGLKVQDIVGRRTDGASEAGMADSVN.

Over residues 1 to 22 the composition is skewed to basic and acidic residues; sequence MAEERGEKRGRRRDRENPRDRD. The segment at 1–26 is disordered; sequence MAEERGEKRGRRRDRENPRDRDDESS. Residues 28-91 enclose the S5 DRBM domain; sequence LVDKLVGINR…EEAKRNLVRI (64 aa).

It belongs to the universal ribosomal protein uS5 family. Part of the 30S ribosomal subunit. Contacts proteins S4 and S8.

In terms of biological role, with S4 and S12 plays an important role in translational accuracy. Its function is as follows. Located at the back of the 30S subunit body where it stabilizes the conformation of the head with respect to the body. In Hyphomonas neptunium (strain ATCC 15444), this protein is Small ribosomal subunit protein uS5.